Here is a 579-residue protein sequence, read N- to C-terminus: Probable zinc metalloprotease EGY1, chloroplastic (579 aa).

Disordered stretches follow at residues 1–42 (MAAA…PASA) and 78–146 (GGGG…NEPP). Residues 1 to 44 (MAAAAAALASSPMVHLTASRLRLPRPARSPAAATPSPSPASAAC) constitute a chloroplast transit peptide. Residues 16–42 (LTASRLRLPRPARSPAAATPSPSPASA) show a composition bias toward low complexity. The span at 78–92 (GGGGGGGGGGGGTGG) shows a compositional bias: gly residues. Composition is skewed to low complexity over residues 104 to 115 (AAAAEAKVGGAV) and 125 to 137 (SGSFSSSSSSSSG). A run of 8 helical transmembrane segments spans residues 272–292 (YVISLLLFLLTVFSCVELGIA), 321–341 (LLPFVESALPVAYGVLAIQLF), 357–377 (LSIPFFIPNFTLGTFGAITQF), 392–412 (MAGPLAGAALSFSMFSVGLLL), 419–439 (ASDLVEVPSKLFQGSLLLGLV), 452–472 (ATVAIHPLVIAGWCGLTTTAF), 505–525 (LLGLGVLGGPLSLPWGLYVLI), and 547–567 (AALIVSVFLVVLTLIPLWDEL).

It belongs to the peptidase M50B family.

Its subcellular location is the plastid. It localises to the chloroplast membrane. In terms of biological role, probable membrane-associated metalloprotease that may be involved in chloroplast development. In Oryza sativa subsp. japonica (Rice), this protein is Probable zinc metalloprotease EGY1, chloroplastic (EGY1).